The primary structure comprises 616 residues: MPKYRSATTTHGRNMAGARALWRATGMTDSDFGKPIIAVVNSFTQFVPGHVHLRDLGKLVAEQIEASGGVAKEFNTIAVDDGIAMGHGGMLYSLPSRELIADSVEYMVNAHCADAMVCISNCDKITPGMLMASLRLNIPVIFVSGGPMEAGKTKLSDQIIKLDLVDAMIQGADPKVSDDQSNQVERSACPTCGSCSGMFTANSMNCLTEALGLSQPGNGSLLATHADRKQLFLNAGKRIVELTKRYYEQNDESALPRNIANKAAFENAMTLDIAMGGSTNTVLHLLAAAQEAEIDFTMSDIDKLSRKVPQLCKVAPSTQKYHMEDVHRAGGVLGILGELDRAGLLNRNVKNVLGLTLPQTLEQYDITVTQDEAVKKMFRAGPAGIRTTQAFSQDCRWDSLDDDRAAGCIRSLEYAYSKDGGLAVLYGNFAENGCIVKTAGVDDSILKFTGPAKVYESQDEAVEAILGGKVVEGDVVVIRYEGPKGGPGMQEMLYPTSFLKSMGLGKACALITDGRFSGGTSGLSIGHVSPEAASGGTIALIEDGDTIAIDIPNRSIQLQLSEAEIAARREAQEARGDKAWTPKNRQRQVSFALRAYASLATSADKGAVRDKSKLGG.

A Mg(2+)-binding site is contributed by D81. [2Fe-2S] cluster is bound at residue C122. 2 residues coordinate Mg(2+): D123 and K124. K124 carries the post-translational modification N6-carboxylysine. C195 serves as a coordination point for [2Fe-2S] cluster. E491 is a binding site for Mg(2+). The active-site Proton acceptor is the S517.

The protein belongs to the IlvD/Edd family. As to quaternary structure, homodimer. The cofactor is [2Fe-2S] cluster. Mg(2+) serves as cofactor.

It catalyses the reaction (2R)-2,3-dihydroxy-3-methylbutanoate = 3-methyl-2-oxobutanoate + H2O. It carries out the reaction (2R,3R)-2,3-dihydroxy-3-methylpentanoate = (S)-3-methyl-2-oxopentanoate + H2O. Its pathway is amino-acid biosynthesis; L-isoleucine biosynthesis; L-isoleucine from 2-oxobutanoate: step 3/4. It participates in amino-acid biosynthesis; L-valine biosynthesis; L-valine from pyruvate: step 3/4. Its function is as follows. Functions in the biosynthesis of branched-chain amino acids. Catalyzes the dehydration of (2R,3R)-2,3-dihydroxy-3-methylpentanoate (2,3-dihydroxy-3-methylvalerate) into 2-oxo-3-methylpentanoate (2-oxo-3-methylvalerate) and of (2R)-2,3-dihydroxy-3-methylbutanoate (2,3-dihydroxyisovalerate) into 2-oxo-3-methylbutanoate (2-oxoisovalerate), the penultimate precursor to L-isoleucine and L-valine, respectively. The protein is Dihydroxy-acid dehydratase of Salmonella paratyphi C (strain RKS4594).